The sequence spans 74 residues: Putative membrane protein insertion efficiency factor (74 aa).

The protein belongs to the UPF0161 family.

Its subcellular location is the cell inner membrane. Its function is as follows. Could be involved in insertion of integral membrane proteins into the membrane. This Syntrophus aciditrophicus (strain SB) protein is Putative membrane protein insertion efficiency factor.